Consider the following 759-residue polypeptide: uncharacterized protein (759 aa).

Composition is skewed to low complexity over residues 1–36 (MSSN…NETN), 142–211 (QQQN…NQHH), and 221–347 (NHSN…GSSS). Disordered stretches follow at residues 1 to 47 (MSSN…AQTP), 142 to 380 (QQQN…PSIG), 409 to 428 (NNNC…GLGY), 463 to 504 (IING…NFEN), and 654 to 759 (LVDD…YLNK). A compositionally biased stretch (polar residues) spans 348–360 (PFQDQARSPSSSF). 2 stretches are compositionally biased toward low complexity: residues 463–495 (IING…GNNN) and 660–747 (HISN…DNNN).

This is an uncharacterized protein from Dictyostelium discoideum (Social amoeba).